Consider the following 585-residue polypeptide: Arginine--tRNA ligase (585 aa).

The 'HIGH' region motif lies at 131-141; it reads ANPTGPMHVGH.

Belongs to the class-I aminoacyl-tRNA synthetase family. In terms of assembly, monomer.

The protein resides in the cytoplasm. The catalysed reaction is tRNA(Arg) + L-arginine + ATP = L-arginyl-tRNA(Arg) + AMP + diphosphate. The chain is Arginine--tRNA ligase from Brucella abortus (strain S19).